A 1755-amino-acid chain; its full sequence is Transposon Ty1-ML1 Gag-Pol polyprotein (1755 aa).

3 stretches are compositionally biased toward polar residues: residues 1–23 (MESQ…SVTS), 48–60 (TKAN…TPAS), and 127–152 (QSQF…GNTF). Disordered regions lie at residues 1 to 88 (MESQ…YPQQ), 126 to 173 (PQSQ…RPPP), and 352 to 421 (GSRN…SKST). Over residues 153 to 165 (TDSSSADSDMTST) the composition is skewed to low complexity. Residues 299–401 (NNGIHINNKV…NSKSKTARAH (103 aa)) form an RNA-binding region. Over residues 402–418 (NVSTSNNSPSTDNDSIS) the composition is skewed to low complexity. Aspartate 461 (for protease activity; shared with dimeric partner) is an active-site residue. Residues 583-640 (NVHTSESTRKYPYPFIHRMLAHANAQTIRYSLKNNTITYFNESDVDWSSAIDYQCPDC) form an integrase-type zinc finger-like region. The region spanning 660 to 835 (NSYEPFQYLH…AGLDISTLLP (176 aa)) is the Integrase catalytic domain. 2 residues coordinate Mg(2+): aspartate 671 and aspartate 736. 3 disordered regions span residues 956-1087 (SKAV…ETEK), 1092-1111 (RSPS…NIVP), and 1130-1171 (DLPL…DSNA). The span at 960–969 (SPTDSTPPST) shows a compositional bias: low complexity. Over residues 1005-1015 (STPQISNIEST) the composition is skewed to polar residues. The span at 1038-1053 (ESSHASKSKDFRHSDS) shows a compositional bias: basic and acidic residues. 2 stretches are compositionally biased toward polar residues: residues 1054–1082 (YSEN…QISD) and 1101–1111 (PENNSSHNIVP). Residues 1178 to 1212 (KKRSLEDNETEIKVSRDTWNTKNMRSLEPPRSKKR) carry the Bipartite nuclear localization signal motif. The Reverse transcriptase Ty1/copia-type domain occupies 1338–1476 (NNYYITQLDI…DILGLEIKYQ (139 aa)). Mg(2+) is bound by residues aspartate 1346, aspartate 1427, aspartate 1428, aspartate 1610, glutamate 1652, and aspartate 1685. Residues 1610 to 1752 (DASYGNQPYY…IKTFKLLTNK (143 aa)) form the RNase H Ty1/copia-type domain.

As to quaternary structure, the capsid protein forms a homotrimer, from which the VLPs are assembled. The protease is a homodimer, whose active site consists of two apposed aspartic acid residues. Initially, virus-like particles (VLPs) are composed of the structural unprocessed proteins Gag and Gag-Pol, and also contain the host initiator methionine tRNA (tRNA(i)-Met) which serves as a primer for minus-strand DNA synthesis, and a dimer of genomic Ty RNA. Processing of the polyproteins occurs within the particle and proceeds by an ordered pathway, called maturation. First, the protease (PR) is released by autocatalytic cleavage of the Gag-Pol polyprotein yielding capsid protein p45 and a Pol-p154 precursor protein. This cleavage is a prerequisite for subsequent processing of Pol-p154 at the remaining sites to release the mature structural and catalytic proteins. Maturation takes place prior to the RT reaction and is required to produce transposition-competent VLPs.

Its subcellular location is the cytoplasm. It localises to the nucleus. It catalyses the reaction DNA(n) + a 2'-deoxyribonucleoside 5'-triphosphate = DNA(n+1) + diphosphate. It carries out the reaction Endonucleolytic cleavage to 5'-phosphomonoester.. Its function is as follows. Capsid protein (CA) is the structural component of the virus-like particle (VLP), forming the shell that encapsulates the retrotransposons dimeric RNA genome. The particles are assembled from trimer-clustered units and there are holes in the capsid shells that allow for the diffusion of macromolecules. CA also has nucleocapsid-like chaperone activity, promoting primer tRNA(i)-Met annealing to the multipartite primer-binding site (PBS), dimerization of Ty1 RNA and initiation of reverse transcription. Functionally, the aspartyl protease (PR) mediates the proteolytic cleavages of the Gag and Gag-Pol polyproteins after assembly of the VLP. Reverse transcriptase/ribonuclease H (RT) is a multifunctional enzyme that catalyzes the conversion of the retro-elements RNA genome into dsDNA within the VLP. The enzyme displays a DNA polymerase activity that can copy either DNA or RNA templates, and a ribonuclease H (RNase H) activity that cleaves the RNA strand of RNA-DNA heteroduplexes during plus-strand synthesis and hydrolyzes RNA primers. The conversion leads to a linear dsDNA copy of the retrotransposon that includes long terminal repeats (LTRs) at both ends. In terms of biological role, integrase (IN) targets the VLP to the nucleus, where a subparticle preintegration complex (PIC) containing at least integrase and the newly synthesized dsDNA copy of the retrotransposon must transit the nuclear membrane. Once in the nucleus, integrase performs the integration of the dsDNA into the host genome. The sequence is that of Transposon Ty1-ML1 Gag-Pol polyprotein (TY1B-ML1) from Saccharomyces cerevisiae (strain ATCC 204508 / S288c) (Baker's yeast).